A 115-amino-acid polypeptide reads, in one-letter code: Large ribosomal subunit protein bL19 (115 aa).

Belongs to the bacterial ribosomal protein bL19 family.

Its function is as follows. This protein is located at the 30S-50S ribosomal subunit interface and may play a role in the structure and function of the aminoacyl-tRNA binding site. This chain is Large ribosomal subunit protein bL19, found in Clostridium kluyveri (strain ATCC 8527 / DSM 555 / NBRC 12016 / NCIMB 10680 / K1).